The chain runs to 200 residues: Probable molybdenum cofactor guanylyltransferase (200 aa).

Residues 9 to 11 (LAG), K21, D69, and D100 contribute to the GTP site. Residue D100 coordinates Mg(2+).

This sequence belongs to the MobA family. The cofactor is Mg(2+).

The protein resides in the cytoplasm. It carries out the reaction Mo-molybdopterin + GTP + H(+) = Mo-molybdopterin guanine dinucleotide + diphosphate. Transfers a GMP moiety from GTP to Mo-molybdopterin (Mo-MPT) cofactor (Moco or molybdenum cofactor) to form Mo-molybdopterin guanine dinucleotide (Mo-MGD) cofactor. This chain is Probable molybdenum cofactor guanylyltransferase, found in Bacillus anthracis (strain CDC 684 / NRRL 3495).